A 383-amino-acid polypeptide reads, in one-letter code: Chaperone protein DnaJ (383 aa).

The J domain occupies 5-70 (DYYELLGVEK…QKRAAYDRFG (66 aa)). The segment at 137 to 215 (GKTATVKVPS…CGGSGRTRKE (79 aa)) adopts a CR-type zinc-finger fold. 8 residues coordinate Zn(2+): Cys-150, Cys-153, Cys-167, Cys-170, Cys-189, Cys-192, Cys-203, and Cys-206. 4 CXXCXGXG motif repeats span residues 150 to 157 (CEDCKGTG), 167 to 174 (CSACHGHG), 189 to 196 (CPTCQGMG), and 203 to 210 (CRSCGGSG).

This sequence belongs to the DnaJ family. As to quaternary structure, homodimer. It depends on Zn(2+) as a cofactor.

Its subcellular location is the cytoplasm. In terms of biological role, participates actively in the response to hyperosmotic and heat shock by preventing the aggregation of stress-denatured proteins and by disaggregating proteins, also in an autonomous, DnaK-independent fashion. Unfolded proteins bind initially to DnaJ; upon interaction with the DnaJ-bound protein, DnaK hydrolyzes its bound ATP, resulting in the formation of a stable complex. GrpE releases ADP from DnaK; ATP binding to DnaK triggers the release of the substrate protein, thus completing the reaction cycle. Several rounds of ATP-dependent interactions between DnaJ, DnaK and GrpE are required for fully efficient folding. Also involved, together with DnaK and GrpE, in the DNA replication of plasmids through activation of initiation proteins. The sequence is that of Chaperone protein DnaJ from Paramagnetospirillum magneticum (strain ATCC 700264 / AMB-1) (Magnetospirillum magneticum).